A 55-amino-acid chain; its full sequence is Protein SOX-19 (55 aa).

The HMG box DNA-binding region spans 1–55 (MVWSQIERRKIMEQWPDMHNAEISKRLGKRWKLLPDYEKIPFIKEAERLRLKHMA).

It is found in the nucleus. This is Protein SOX-19 (Sox19) from Mus musculus (Mouse).